The following is a 771-amino-acid chain: Transcription factor TAS2 (771 aa).

The interval 33-53 (RSRAESASGPQQPSRRQPQTS) is disordered. A compositionally biased stretch (low complexity) spans 42 to 51 (PQQPSRRQPQ). Positions 54–80 (CDLCRSRKIKCDRGTPCGNCRTRGLAC) form a DNA-binding region, zn(2)-C6 fungal-type. The interval 125–150 (AVGGSGNAENGAHGDATPRVPLSGLE) is disordered.

Its subcellular location is the nucleus. In terms of biological role, transcription factor; part of the gene cluster that mediates the biosynthesis of the toxin tenuazonic acid (TeA), an inhibitor of protein biosynthesis on ribosomes by suppressing the release of new protein. Directly regulates the expression of the hybrid PKS-NRPS synthetase TAS1 and the subsequent production of TeA. The chain is Transcription factor TAS2 from Pyricularia oryzae (strain 70-15 / ATCC MYA-4617 / FGSC 8958) (Rice blast fungus).